The chain runs to 178 residues: ATP-dependent protease subunit HslV (178 aa).

T8 is an active-site residue. The Na(+) site is built by G163, C166, and T169.

Belongs to the peptidase T1B family. HslV subfamily. As to quaternary structure, a double ring-shaped homohexamer of HslV is capped on each side by a ring-shaped HslU homohexamer. The assembly of the HslU/HslV complex is dependent on binding of ATP.

The protein resides in the cytoplasm. It catalyses the reaction ATP-dependent cleavage of peptide bonds with broad specificity.. Its activity is regulated as follows. Allosterically activated by HslU binding. Functionally, protease subunit of a proteasome-like degradation complex believed to be a general protein degrading machinery. This chain is ATP-dependent protease subunit HslV, found in Treponema denticola (strain ATCC 35405 / DSM 14222 / CIP 103919 / JCM 8153 / KCTC 15104).